A 364-amino-acid chain; its full sequence is F-box/LRR-repeat protein At1g55660 (364 aa).

Positions 52-98 (MDKISQLPDELLVKVLSFLSTKDAVSTSILSMRWKSLWMWLPKLEYN) constitute an F-box domain. LRR repeat units lie at residues 158-179 (NVRELSLKLFNFAELPTKLPKS), 185-206 (SIVILKLKDEILVDVPRKVCLP), 207-228 (SLKTLFLGRVTYSDANSLHRLL), 233-254 (VLEDLVMERDKIDNLGKLSVIV), 256-277 (SLQRLTLKMSRPCHLDGLKMNS), and 279-300 (SLKYLKVIDERLESDSDDESDS).

The protein is F-box/LRR-repeat protein At1g55660 of Arabidopsis thaliana (Mouse-ear cress).